The primary structure comprises 392 residues: Probable Ni/Fe-hydrogenase 2 b-type cytochrome subunit (392 aa).

The Periplasmic portion of the chain corresponds to 1–11; sequence MSHDPQPLGGK. Residues 12 to 32 form a helical membrane-spanning segment; the sequence is IISKPVMIFGPLIVICMLLIV. Over 33-34 the chain is Cytoplasmic; it reads KR. Residues 35–55 traverse the membrane as a helical segment; sequence LVFGLGSVSDLNGGFPWGVWI. Topologically, residues 56 to 58 are periplasmic; that stretch reads AFD. Residues 59–79 form a helical membrane-spanning segment; it reads LLIGTGFACGGWALAWAVYVF. Over 80–90 the chain is Cytoplasmic; sequence NRGQYHPLVRP. The helical transmembrane segment at 91–111 threads the bilayer; sequence ALLASLFGYSLGGLSITIDVG. At 112–133 the chain is on the periplasmic side; that stretch reads RYWNLPYFYIPGHFNVNSVLFE. Residues 134–154 traverse the membrane as a helical segment; the sequence is TAVCMTIYIGVMALEFAPALF. The Cytoplasmic segment spans residues 155-168; that stretch reads ERLGWKVSLQRLNK. The helical transmembrane segment at 169 to 189 threads the bilayer; it reads VMFFIIALGALLPTMHQSSMG. At 190–207 the chain is on the periplasmic side; that stretch reads SLMISAGYKVHPLWQSYE. A helical transmembrane segment spans residues 208–228; that stretch reads MLPLFSLLTAFIMGFSIVIFE. At 229 to 249 the chain is on the cytoplasmic side; the sequence is GSLVQAGLRGNGPDEKSLFVK. Residues 250-270 traverse the membrane as a helical segment; it reads LTNTISVLLAIFIVLRFGELI. At 271 to 281 the chain is on the periplasmic side; the sequence is YRDKLSLAFAG. A helical membrane pass occupies residues 282–302; that stretch reads DFYSVMFWIEVLLMLFPLVVL. Topologically, residues 303-333 are cytoplasmic; it reads RVAKLRNDSRMLFLSALSALLGCATWRLTYS. Residues 334-354 traverse the membrane as a helical segment; the sequence is LVAFNPGGGYAYFPTWEELLI. Ser-355 is a topological domain (periplasmic). The chain crosses the membrane as a helical span at residues 356–376; sequence IGFVAIEICAYIVLIRLLPIL. The Cytoplasmic portion of the chain corresponds to 377-392; the sequence is PPLKQNDHNRHEASKA.

This sequence belongs to the NrfD family.

Its subcellular location is the cell inner membrane. Functionally, probable b-type cytochrome. The sequence is that of Probable Ni/Fe-hydrogenase 2 b-type cytochrome subunit (hybB) from Escherichia coli (strain K12).